The sequence spans 568 residues: bZIP transcription factor 60 (568 aa).

Low complexity-rich tracts occupy residues 1-13 and 60-78; these read MAEPDLLAPFADL and TTSSSSSAAGSPEAGTSSA. 2 disordered regions span residues 1–29 and 45–134; these read MAEPDLLAPFADLPFPPGDDFPDFPTLGD and DFDV…RKKQ. At 1-240 the chain is on the cytoplasmic side; it reads MAEPDLLAPF…PAKKARKTKK (240 aa). Positions 103-113 are enriched in basic and acidic residues; sequence GGKDGKDDEAK. In terms of domain architecture, bZIP spans 111-171; it reads EAKRRARLVR…AENAALKQQL (61 aa). A basic motif region spans residues 113-144; the sequence is KRRARLVRNRESAHQSRQRKKQYVEELEGKVK. Residues 150–157 are leucine-zipper; it reads IADLTARI. A helical membrane pass occupies residues 241–261; sequence VAGVSLLGLLFLMMVCGCLVP. The Lumenal portion of the chain corresponds to 262 to 568; sequence AVNRMYGAAY…LPFKSHSPHL (307 aa). N-linked (GlcNAc...) asparagine glycosylation is found at N307, N452, N456, N488, and N499. The interval 479–510 is disordered; the sequence is AIPLRGSTSNDTDHFKAPPKNHSQSHAGRKPV.

The protein belongs to the bZIP family.

The protein localises to the endoplasmic reticulum membrane. The protein resides in the nucleus. Functionally, transcription factor involved in endoplasmic reticulum (ER) stress response. Acts as a ER stress sensor and activates the transcription factor BZIP50 and the chaperone BIP1. The protein is bZIP transcription factor 60 of Oryza sativa subsp. japonica (Rice).